We begin with the raw amino-acid sequence, 690 residues long: DNA ligase (690 aa).

Residues 43-47 (DAEYD), 92-93 (SI), and Glu-129 contribute to the NAD(+) site. Lys-131 serves as the catalytic N6-AMP-lysine intermediate. Residues Arg-152, Glu-188, Lys-309, and Lys-333 each coordinate NAD(+). The Zn(2+) site is built by Cys-427, Cys-430, Cys-445, and Cys-451. A BRCT domain is found at 610–690 (VTPTPLSGKT…GLKELLDGHS (81 aa)).

This sequence belongs to the NAD-dependent DNA ligase family. LigA subfamily. The cofactor is Mg(2+). Requires Mn(2+) as cofactor.

The catalysed reaction is NAD(+) + (deoxyribonucleotide)n-3'-hydroxyl + 5'-phospho-(deoxyribonucleotide)m = (deoxyribonucleotide)n+m + AMP + beta-nicotinamide D-nucleotide.. Functionally, DNA ligase that catalyzes the formation of phosphodiester linkages between 5'-phosphoryl and 3'-hydroxyl groups in double-stranded DNA using NAD as a coenzyme and as the energy source for the reaction. It is essential for DNA replication and repair of damaged DNA. The polypeptide is DNA ligase (Albidiferax ferrireducens (strain ATCC BAA-621 / DSM 15236 / T118) (Rhodoferax ferrireducens)).